The primary structure comprises 325 residues: GTP 3',8-cyclase (325 aa).

Residues 4–219 (NYNRNINYLR…HGLQQKFGLL (216 aa)) enclose the Radical SAM core domain. Residue Arg13 coordinates GTP. Positions 20 and 24 each coordinate [4Fe-4S] cluster. Tyr26 contributes to the S-adenosyl-L-methionine binding site. [4Fe-4S] cluster is bound at residue Cys27. Arg63 contributes to the GTP binding site. Gly67 is a binding site for S-adenosyl-L-methionine. Residue Thr94 coordinates GTP. An S-adenosyl-L-methionine-binding site is contributed by Ser118. Lys155 contacts GTP. An S-adenosyl-L-methionine-binding site is contributed by Met189. [4Fe-4S] cluster is bound by residues Cys254 and Cys257. 259 to 261 (RLR) contacts GTP. Residue Cys271 coordinates [4Fe-4S] cluster.

The protein belongs to the radical SAM superfamily. MoaA family. In terms of assembly, monomer and homodimer. [4Fe-4S] cluster is required as a cofactor.

It carries out the reaction GTP + AH2 + S-adenosyl-L-methionine = (8S)-3',8-cyclo-7,8-dihydroguanosine 5'-triphosphate + 5'-deoxyadenosine + L-methionine + A + H(+). It participates in cofactor biosynthesis; molybdopterin biosynthesis. Its function is as follows. Catalyzes the cyclization of GTP to (8S)-3',8-cyclo-7,8-dihydroguanosine 5'-triphosphate. The polypeptide is GTP 3',8-cyclase (Desulforamulus reducens (strain ATCC BAA-1160 / DSM 100696 / MI-1) (Desulfotomaculum reducens)).